The following is an 889-amino-acid chain: Chromatin structure-remodeling complex subunit RSC2 (889 aa).

A Bromo 1 domain is found at 12 to 120 (QNSSALYKDL…KYLKDTIYPN (109 aa)). The disordered stretch occupies residues 151–268 (EKAEEVARAN…QVSRTQVKRG (118 aa)). A compositionally biased stretch (low complexity) spans 158–174 (RANAARAESSSSMNSTE). Acidic residues predominate over residues 197 to 209 (NNDEDYEATDMDI). The span at 210–222 (DNPKDADFPDLIR) shows a compositional bias: basic and acidic residues. Residues 241-250 (STTPSHSGTP) are compositionally biased toward polar residues. Residues 255–268 (PRHRQVSRTQVKRG) are compositionally biased toward basic residues. The 103-residue stretch at 280-382 (RMKNVMKVLK…KTFTSLARFE (103 aa)) folds into the Bromo 2 domain. The region spanning 408–526 (ISYHVGDWAL…ESDKIFNKIR (119 aa)) is the BAH domain. A disordered region spans residues 601 to 624 (GEYATSDDCPRYIIRPNDSPEEGQ). At Tyr-612 the chain carries Phosphotyrosine. Ser-682 is subject to Phosphoserine. The disordered stretch occupies residues 831 to 865 (EVEETMEDVTGKDKDDDGLEPDVENEKESLPGPFV).

Belongs to the RSC1 family. In terms of assembly, component of the two forms of the RSC complex composed of at least either RSC1 or RSC2, and ARP7, ARP9, LDB7, NPL6, RSC3, RSC30, RSC4, RSC58, RSC6, RSC8, RSC9, SFH1, STH1, HTL1 and probably RTT102. The complexes interact with histone and histone variant components of centromeric chromatin.

Its subcellular location is the nucleus. Component of the chromatin structure remodeling complex (RSC), which is involved in transcription regulation and nucleosome positioning. RSC is responsible for the transfer of a histone octamer from a nucleosome core particle to naked DNA. The reaction requires ATP and involves an activated RSC-nucleosome intermediate. Remodeling reaction also involves DNA translocation, DNA twist and conformational change. As a reconfigurer of centromeric and flanking nucleosomes, RSC complex is required both for proper kinetochore function in chromosome segregation and, via a PKC1-dependent signaling pathway, for organization of the cellular cytoskeleton. This subunit is involved in meiotic sporulation through regulating IME2 expression, and is also essential for 2-micron plasmid maintenance and for normal REP1 protein localization. This chain is Chromatin structure-remodeling complex subunit RSC2 (RSC2), found in Saccharomyces cerevisiae (strain ATCC 204508 / S288c) (Baker's yeast).